The following is a 408-amino-acid chain: Potassium channel subfamily K member 13 (408 aa).

The Cytoplasmic segment spans residues 1-19 (MAGRGFSWGPGHLNEDNAR). The chain crosses the membrane as a helical span at residues 20–40 (FLLLAALIVLYLLGGAAVFSA). N-linked (GlcNAc...) asparagine glycans are attached at residues asparagine 59 and asparagine 65. Residues 95 to 115 (WDFTGAFYFVGTVVSTIGFGM) constitute an intramembrane region (pore-forming). Positions 110, 111, and 112 each coordinate K(+). The selectivity filter 1 stretch occupies residues 110 to 115 (TIGFGM). A helical transmembrane segment spans residues 125–145 (IFLIFYGLVGCSSTILFFNLF). Over 146–193 (LERLITIIAYIMKSCHQRQLRRRGALPQESLKDAGQCEVDSLAGWKPS) the chain is Cytoplasmic. Residues 194–214 (VYYVMLILCTASILISCCASA) form a helical membrane-spanning segment. The pore-forming intramembrane region spans 224–244 (YFDSLYFCFVAFSTIGFGDLV). K(+) contacts are provided by threonine 237, isoleucine 238, glycine 239, and phenylalanine 240. The segment at 237-242 (TIGFGD) is selectivity filter 2. A helical transmembrane segment spans residues 263–283 (VFILMGVCCIYSLFNVISILI). Residues 284–408 (KQSLNWILRK…NRLAETSGDR (125 aa)) are Cytoplasmic-facing.

It belongs to the two pore domain potassium channel (TC 1.A.1.8) family. Homodimer. Heterodimer with KCNK12. Expressed in microglia (at protein level).

The protein localises to the cell membrane. It catalyses the reaction K(+)(in) = K(+)(out). With respect to regulation, the channel conductance is activated by arachidonic acid and inhibited by Ba(2+) ions, volatile anesthetics such as halothane and antiarrhythmic drugs mexiletine and lidocaine. Insensitive to extracellular pH change. Functionally, k(+) channel that conducts outward rectifying tonic currents potentiated by purinergic signals. Homo- and heterodimerizes to form functional channels with distinct regulatory and gating properties. Contributes most of K(+) currents at the plasma membrane of resting microglia. Maintains a depolarized membrane potential required for proper ramified microglia morphology and phagocytosis, selectively mediating microglial pruning of presynaptic compartments at hippocampal excitatory synapses. Upon local release of ATP caused by neuronal injury or infection, it is potentiated by P2RY12 and P2RX7 receptor signaling and contributes to ATP-triggered K(+) efflux underlying microglial NLRP3 inflammasome assembly and IL1B release. The protein is Potassium channel subfamily K member 13 of Homo sapiens (Human).